Here is a 447-residue protein sequence, read N- to C-terminus: Cytochrome P450 monooxygenase aunB (447 aa).

Cysteine 386 is a binding site for heme.

It belongs to the cytochrome P450 family. Heme is required as a cofactor.

It catalyses the reaction 2 fonsecin B + NADPH + O2 + H(+) = aurasperone B + NADP(+) + 2 H2O. The enzyme catalyses 2 rubrofusarin B + NADPH + O2 + H(+) = aurasperone A + NADP(+) + 2 H2O. It participates in secondary metabolite biosynthesis. Its function is as follows. Cytochrome P450 monooxygenase; part of the gene cluster that mediates the biosynthesis of aurasperone B, a dimeric gamma-naphthopyrone. The first step in the biosynthesis of aurasperone B is the production of gamma-naphthopyrone precursor YWA1 by the non-reducing polyketide synthase albA, via condensation of one acetyl-CoA starter unit with 6 malonyl-CoA units. YWA1 is then methylated by aunE at position C-6 to yield foncesin which is further methylated at position C-8 by aunD to produce fonsecin B. A key enzyme in the biosynthetic pathway is the cytochrome P450 monooxygenase aunB which catalyzes the oxidative dimerization of fonsecin B to aurasperone B. AunB also catalyzes the oxidative dimerization of rubrofusarin B into aurasperone A. The sequence is that of Cytochrome P450 monooxygenase aunB from Aspergillus niger (strain ATCC MYA-4892 / CBS 513.88 / FGSC A1513).